Reading from the N-terminus, the 262-residue chain is Hydroxyethylthiazole kinase (262 aa).

Met44 is a substrate binding site. Residues Arg118 and Ser166 each contribute to the ATP site. Gly193 provides a ligand contact to substrate.

This sequence belongs to the Thz kinase family. Requires Mg(2+) as cofactor.

It catalyses the reaction 5-(2-hydroxyethyl)-4-methylthiazole + ATP = 4-methyl-5-(2-phosphooxyethyl)-thiazole + ADP + H(+). It functions in the pathway cofactor biosynthesis; thiamine diphosphate biosynthesis; 4-methyl-5-(2-phosphoethyl)-thiazole from 5-(2-hydroxyethyl)-4-methylthiazole: step 1/1. In terms of biological role, catalyzes the phosphorylation of the hydroxyl group of 4-methyl-5-beta-hydroxyethylthiazole (THZ). This Chlamydia abortus (strain DSM 27085 / S26/3) (Chlamydophila abortus) protein is Hydroxyethylthiazole kinase.